A 149-amino-acid chain; its full sequence is Large ribosomal subunit protein uL15 (149 aa).

Basic residues-rich tracts occupy residues 1-14 (MPSR…HRGH) and 21-30 (RIGKHRKHPG). The tract at residues 1-39 (MPSRFTKTRKHRGHVSAGKGRIGKHRKHPGGRGMAGGQH) is disordered. 2 consecutive short sequence motifs (nuclear localization signal) follow at residues 7 to 13 (KTRKHRG) and 24 to 30 (KHRKHPG). Lys96 participates in a covalent cross-link: Glycyl lysine isopeptide (Lys-Gly) (interchain with G-Cter in ubiquitin).

It belongs to the universal ribosomal protein uL15 family. In terms of assembly, component of the large ribosomal subunit (LSU). Mature yeast ribosomes consist of a small (40S) and a large (60S) subunit. The 40S small subunit contains 1 molecule of ribosomal RNA (18S rRNA) and 33 different proteins (encoded by 57 genes). The large 60S subunit contains 3 rRNA molecules (25S, 5.8S and 5S rRNA) and 46 different proteins (encoded by 81 genes).

It is found in the cytoplasm. In terms of biological role, component of the ribosome, a large ribonucleoprotein complex responsible for the synthesis of proteins in the cell. The small ribosomal subunit (SSU) binds messenger RNAs (mRNAs) and translates the encoded message by selecting cognate aminoacyl-transfer RNA (tRNA) molecules. The large subunit (LSU) contains the ribosomal catalytic site termed the peptidyl transferase center (PTC), which catalyzes the formation of peptide bonds, thereby polymerizing the amino acids delivered by tRNAs into a polypeptide chain. The nascent polypeptides leave the ribosome through a tunnel in the LSU and interact with protein factors that function in enzymatic processing, targeting, and the membrane insertion of nascent chains at the exit of the ribosomal tunnel. In Saccharomyces cerevisiae (strain ATCC 204508 / S288c) (Baker's yeast), this protein is Large ribosomal subunit protein uL15.